Consider the following 159-residue polypeptide: MIEIEVFPHRFLKATTTEKFLNSAYSLETVQRVIMHGESLPQKVNYGPAKGTPVNHSERKLINVQGVEVQLTLQVGRFWILLDDETELSKIDEICKELFQYGYKVSEGRFIKDSPTVTDYMKYGESFVNNIDKRMLGVTDPRSRFENSVSLIPKSEKGE.

In terms of assembly, MCR is composed of three subunits: alpha, beta, and gamma. The function of proteins C and D is not known.

This Methanococcus voltae protein is Methyl-coenzyme M reductase operon protein D (mcrD).